We begin with the raw amino-acid sequence, 456 residues long: Putative E3 ubiquitin-protein ligase XBAT31 (456 aa).

5 ANK repeats span residues 45–74 (DRHS…NPDL), 78–107 (HKQT…NILM), 112–141 (NRRT…SSPV), 157–186 (KGAT…LVCA), and 194–224 (PGST…RLQR). The RING-type zinc-finger motif lies at 319 to 368 (CCICFEQVCTIEVKDCGHQMCAQCTLALCCHNKPNPTTSTVTPPVCPFCR).

The catalysed reaction is S-ubiquitinyl-[E2 ubiquitin-conjugating enzyme]-L-cysteine + [acceptor protein]-L-lysine = [E2 ubiquitin-conjugating enzyme]-L-cysteine + N(6)-ubiquitinyl-[acceptor protein]-L-lysine.. It functions in the pathway protein modification; protein ubiquitination. No E3 ubiquitin-protein ligase activity observed when associated with the E2 enzyme UBC8 in vitro. This chain is Putative E3 ubiquitin-protein ligase XBAT31 (XBAT31), found in Arabidopsis thaliana (Mouse-ear cress).